A 477-amino-acid polypeptide reads, in one-letter code: Cytochrome c-552 (477 aa).

The N-terminal stretch at 1-26 (MVRISTSISYLWGMVASLFLMMPAYS) is a signal peptide. A heme c-binding site is contributed by His94. Heme contacts are provided by Cys122, Cys125, and Lys126. Residues Cys160, Cys163, His164, Cys209, Cys212, and His213 each coordinate heme c. 4 residues coordinate Ca(2+): Glu215, Tyr216, Lys261, and Gln263. Position 216 (Tyr216) interacts with substrate. Position 264 (His264) interacts with substrate. His275, Cys282, Cys285, His286, His301, Cys314, Cys317, His318, and His393 together coordinate heme c.

It belongs to the cytochrome c-552 family. It depends on Ca(2+) as a cofactor. The cofactor is heme c.

The protein resides in the periplasm. It catalyses the reaction 6 Fe(III)-[cytochrome c] + NH4(+) + 2 H2O = 6 Fe(II)-[cytochrome c] + nitrite + 8 H(+). Its pathway is nitrogen metabolism; nitrate reduction (assimilation). In terms of biological role, catalyzes the reduction of nitrite to ammonia, consuming six electrons in the process. This Pectobacterium carotovorum subsp. carotovorum (strain PC1) protein is Cytochrome c-552.